Consider the following 180-residue polypeptide: uncharacterized protein (180 aa).

Residues 45-180 (FVFSQVRTLD…GNRCAFWYAN (136 aa)) form the N-acetyltransferase domain.

This sequence belongs to the acetyltransferase family. Ycf52 subfamily.

This is an uncharacterized protein from Prochlorococcus marinus (strain SARG / CCMP1375 / SS120).